Here is a 156-residue protein sequence, read N- to C-terminus: NAD(P)H-quinone oxidoreductase subunit N (156 aa).

The protein belongs to the complex I NdhN subunit family. In terms of assembly, NDH-1 can be composed of about 15 different subunits; different subcomplexes with different compositions have been identified which probably have different functions.

The protein localises to the cellular thylakoid membrane. The enzyme catalyses a plastoquinone + NADH + (n+1) H(+)(in) = a plastoquinol + NAD(+) + n H(+)(out). The catalysed reaction is a plastoquinone + NADPH + (n+1) H(+)(in) = a plastoquinol + NADP(+) + n H(+)(out). NDH-1 shuttles electrons from an unknown electron donor, via FMN and iron-sulfur (Fe-S) centers, to quinones in the respiratory and/or the photosynthetic chain. The immediate electron acceptor for the enzyme in this species is believed to be plastoquinone. Couples the redox reaction to proton translocation, and thus conserves the redox energy in a proton gradient. Cyanobacterial NDH-1 also plays a role in inorganic carbon-concentration. This Prochlorococcus marinus subsp. pastoris (strain CCMP1986 / NIES-2087 / MED4) protein is NAD(P)H-quinone oxidoreductase subunit N.